Here is a 629-residue protein sequence, read N- to C-terminus: MSSNPTSSVREFEYKAEMKQLLNLIVHSLYTHPEIFLRELISNASDALGKARFRMLSSDEGLDKSGDLKITITVDKESGSFVIEDTGIGMSEEELISNLGTVASSGTLGFMEALKEQQKEGQRLDANLIGQFGVGFYSVFMVTDEVTVETKSIESGLQGWRWKSSGQGSYTIEPVEREARGTRISFILKEEFREFAQEYRVEQIIKKYSNFVEYPIYIGSRQINSMTALWQRPKSELKQEEVNEFYKFIANDFKDPLDYLHVSVEGAVSFKALLFIPSEAPMELLYNQGALEKRGPQLYVKKVLIQHECRDLLPEYLRFVSGVVDTEDLPLNVSRELVQASPVMAKIKQILTTKLLGWFDTIAKEEPEKFRAFYKAFGTILKIGLNTDFTNRDKLIDLLRFETTKTVEGEYVTLKEYVGRMAEGQTEIYYHSGSSRAQMLAHPNLEYFRKRDIEVLLLSDPVDVFVIPSIFEYDKKPLKSIEKAEIDMSTVEPEGERLSAEGTVGVISLFKEVLGERVADVVESRRLVSSPVTLVSGKDALDSQFEKMMKMMNKDADMPSTKKILEINTAHPIIRNLAGKHAVGLSTDPVVRAAVTQLFESALLLEGDLESVADYVSRMNELVEAATRS.

Residues 1–335 are a; substrate-binding; sequence MSSNPTSSVR…TEDLPLNVSR (335 aa). The b stretch occupies residues 336–547; sequence ELVQASPVMA…KDALDSQFEK (212 aa). The interval 548–629 is c; sequence MMKMMNKDAD…NELVEAATRS (82 aa).

The protein belongs to the heat shock protein 90 family. In terms of assembly, homodimer.

It localises to the cytoplasm. Functionally, molecular chaperone. Has ATPase activity. The sequence is that of Chaperone protein HtpG from Chlorobaculum tepidum (strain ATCC 49652 / DSM 12025 / NBRC 103806 / TLS) (Chlorobium tepidum).